A 366-amino-acid chain; its full sequence is Chorismate synthase (366 aa).

The NADP(+) site is built by Arg48 and Arg54. Residues Arg125–Ser127, Asn237–Ala238, Gly277, Lys292–Ser296, and Arg318 contribute to the FMN site.

Belongs to the chorismate synthase family. As to quaternary structure, homotetramer. Requires FMNH2 as cofactor.

The enzyme catalyses 5-O-(1-carboxyvinyl)-3-phosphoshikimate = chorismate + phosphate. The protein operates within metabolic intermediate biosynthesis; chorismate biosynthesis; chorismate from D-erythrose 4-phosphate and phosphoenolpyruvate: step 7/7. Catalyzes the anti-1,4-elimination of the C-3 phosphate and the C-6 proR hydrogen from 5-enolpyruvylshikimate-3-phosphate (EPSP) to yield chorismate, which is the branch point compound that serves as the starting substrate for the three terminal pathways of aromatic amino acid biosynthesis. This reaction introduces a second double bond into the aromatic ring system. This is Chorismate synthase from Acidovorax ebreus (strain TPSY) (Diaphorobacter sp. (strain TPSY)).